The following is a 425-amino-acid chain: Adenylosuccinate synthetase (425 aa).

GTP-binding positions include Gly12 to Lys18 and Gly40 to Thr42. The active-site Proton acceptor is Asp13. Residues Asp13 and Gly40 each contribute to the Mg(2+) site. IMP contacts are provided by residues Asp13 to Lys16, Asn38 to His41, Thr130, Arg144, Gln225, Thr240, and Arg304. Residue His41 is the Proton donor of the active site. Ala300–Arg306 contacts substrate. GTP-binding positions include Arg306, Lys332–Asp334, and Ser414–Gly416.

It belongs to the adenylosuccinate synthetase family. In terms of assembly, homodimer. Mg(2+) is required as a cofactor.

The protein localises to the cytoplasm. The catalysed reaction is IMP + L-aspartate + GTP = N(6)-(1,2-dicarboxyethyl)-AMP + GDP + phosphate + 2 H(+). Its pathway is purine metabolism; AMP biosynthesis via de novo pathway; AMP from IMP: step 1/2. Its function is as follows. Plays an important role in the de novo pathway of purine nucleotide biosynthesis. Catalyzes the first committed step in the biosynthesis of AMP from IMP. This Desulfovibrio desulfuricans (strain ATCC 27774 / DSM 6949 / MB) protein is Adenylosuccinate synthetase.